The primary structure comprises 1125 residues: Kinase and exchange factor for Rac B (1125 aa).

Disordered stretches follow at residues 50–175 (VTGG…ASIN), 247–287 (SVPG…GGKF), and 322–362 (KTRD…VNSD). A compositionally biased stretch (low complexity) spans 59–91 (NNQQQQQNNNNNNNNNNNNNNNNNNNNNNNNNN). The segment covering 92-106 (SGEISSNNSTPSILF) has biased composition (polar residues). Pro residues predominate over residues 113-124 (TAPPAPPQPTTP). Low complexity predominate over residues 137–161 (NINQQPIGGVNNNNNNNNKDSPSNK). The DH domain maps to 380–571 (KRRQVSLQIL…KSTVDYVKEK (192 aa)). Residues 601-822 (RYVREGMLTE…WIQAIHANII (222 aa)) form the PH domain. Disordered stretches follow at residues 693–729 (INNMTNNDSKSKNNNNNNSNGNNNNNNINSNSNSNNN) and 761–791 (SNNNNNNNINSNNNINGNNNNGNNSVNYSNG). Positions 694-729 (NNMTNNDSKSKNNNNNNSNGNNNNNNINSNSNSNNN) are enriched in low complexity. The region spanning 848-1117 (IKLCEQIGSG…QLVQKLTKML (270 aa)) is the Protein kinase domain. Residues 854–862 (IGSGGSGCT) and Lys876 each bind ATP. The Proton acceptor role is filled by Asp971.

It belongs to the protein kinase superfamily. STE Ser/Thr protein kinase family. It depends on Mg(2+) as a cofactor.

It carries out the reaction L-seryl-[protein] + ATP = O-phospho-L-seryl-[protein] + ADP + H(+). It catalyses the reaction L-threonyl-[protein] + ATP = O-phospho-L-threonyl-[protein] + ADP + H(+). The protein is Kinase and exchange factor for Rac B of Dictyostelium discoideum (Social amoeba).